The sequence spans 473 residues: MTDRIELSACTSMMVGKNASIDGSTMISRNEDRFYAIHPKRFFVQPAVHNRHETYVSKYNGLTMPLPEEGYRYTSTPNGDLSDGLNEEDGINEKNVALSATESVYANERVLAYDPLIKNGLAEDSMCSLVLPYINSAREGVKLMGDIVTKYGSAEGNGIQYSDENEVWYQEIVTGHHWVAAKIPDDCYAVAANQVAIENIDFNDPDNYMWSEGIQEFVSGNHLNPSETEWNFRKIFGTDTEKDRHYNTPRVWYAQRYLNPEIKQEPESSDLPFIRKANRKLSVEDVQYVLKSHYNETEYDPLGNGTEEQKTTYRAISLSRTQNSHICQIRNNVPDAVKGVQWLGFGVPTFCPHVPFFTNANDTDETYRELPEKMTLKNAYWLHEALAMIVESHYGAFKQADIDYQKALSEWARTKIAATDKAIENQADAVAFLTAQNHEIATHYNEATTDLLAQLVTEGTQLSKLTFVMDKNL.

The active site involves Cys-10.

It belongs to the peptidase C69 family.

The catalysed reaction is an L-aminoacyl-L-amino acid + H2O = 2 an L-alpha-amino acid. The polypeptide is Probable dipeptidase (Latilactobacillus sakei (Lactobacillus sakei)).